The sequence spans 490 residues: ATP synthase subunit beta, chloroplastic (490 aa).

Position 6 is a phosphothreonine (threonine 6). At serine 13 the chain carries Phosphoserine. ATP is bound at residue 172–179 (GGAGVGKT).

Belongs to the ATPase alpha/beta chains family. As to quaternary structure, F-type ATPases have 2 components, CF(1) - the catalytic core - and CF(0) - the membrane proton channel. CF(1) has five subunits: alpha(3), beta(3), gamma(1), delta(1), epsilon(1). CF(0) has four main subunits: a(1), b(1), b'(1) and c(9-12).

The protein resides in the plastid. It localises to the chloroplast thylakoid membrane. The catalysed reaction is ATP + H2O + 4 H(+)(in) = ADP + phosphate + 5 H(+)(out). Produces ATP from ADP in the presence of a proton gradient across the membrane. The catalytic sites are hosted primarily by the beta subunits. This is ATP synthase subunit beta, chloroplastic from Aethionema grandiflorum (Persian stone-cress).